Here is a 453-residue protein sequence, read N- to C-terminus: Keratin, type I cytoskeletal 15 (453 aa).

A head region spans residues M1–N102. Phosphoserine is present on residues S16, S17, S34, S48, and S56. The coil 1A stretch occupies residues E103–W138. Residues E103 to M415 enclose the IF rod domain. The tract at residues Y139–T157 is linker 1. The segment at T158 to F249 is coil 1B. Residues S250 to L269 form a linker 12 region. A coil 2 region spans residues T270 to Q411. K298 is covalently cross-linked (Glycyl lysine isopeptide (Lys-Gly) (interchain with G-Cter in SUMO2)). Residues T299 and T321 each carry the phosphothreonine modification. The segment at D412 to I453 is tail. A Glycyl lysine isopeptide (Lys-Gly) (interchain with G-Cter in SUMO1); alternate cross-link involves residue K444. A Glycyl lysine isopeptide (Lys-Gly) (interchain with G-Cter in SUMO2); alternate cross-link involves residue K444.

This sequence belongs to the intermediate filament family. In terms of assembly, heterotetramer of two type I and two type II keratins. Interacts with NOD2. Expressed in the basal cell layers of several stratified epithelia including esophagus, tongue, stomach, epidermis and hair follicle. In the hair follicle, expression is detected mainly in the basal layer of the outer root sheath (ORS), except just above the follicle bulb where it occurs throughout its thickness. Low expression levels are seen in the single layer of ORS cells around the base of the follicle which increases in the palisade-like cells of the bulb. Also expressed in the basal cells of the sebaceous glands, and expression in the epidermis occurs in a punctate pattern.

The protein is Keratin, type I cytoskeletal 15 of Ovis aries (Sheep).